The sequence spans 316 residues: ATP synthase gamma chain (316 aa).

It belongs to the ATPase gamma chain family. As to quaternary structure, F-type ATPases have 2 components, CF(1) - the catalytic core - and CF(0) - the membrane proton channel. CF(1) has five subunits: alpha(3), beta(3), gamma(1), delta(1), epsilon(1). CF(0) has three main subunits: a, b and c.

It is found in the cellular thylakoid membrane. Its function is as follows. Produces ATP from ADP in the presence of a proton gradient across the membrane. The gamma chain is believed to be important in regulating ATPase activity and the flow of protons through the CF(0) complex. The polypeptide is ATP synthase gamma chain (Synechococcus sp. (strain ATCC 27144 / PCC 6301 / SAUG 1402/1) (Anacystis nidulans)).